The following is a 420-amino-acid chain: Pyridinium-3,5-bisthiocarboxylic acid mononucleotide nickel insertion protein (420 aa).

The tract at residues Asn81–His104 is disordered. A compositionally biased stretch (basic and acidic residues) spans Glu90 to Ser99.

It belongs to the LarC family.

The catalysed reaction is Ni(II)-pyridinium-3,5-bisthiocarboxylate mononucleotide = pyridinium-3,5-bisthiocarboxylate mononucleotide + Ni(2+). Involved in the biosynthesis of a nickel-pincer cofactor ((SCS)Ni(II) pincer complex). Binds Ni(2+), and functions in nickel delivery to pyridinium-3,5-bisthiocarboxylic acid mononucleotide (P2TMN), to form the mature cofactor. Is thus probably required for the activation of nickel-pincer cofactor-dependent enzymes. The sequence is that of Pyridinium-3,5-bisthiocarboxylic acid mononucleotide nickel insertion protein from Clostridium acetobutylicum (strain ATCC 824 / DSM 792 / JCM 1419 / IAM 19013 / LMG 5710 / NBRC 13948 / NRRL B-527 / VKM B-1787 / 2291 / W).